Consider the following 450-residue polypeptide: Probable ECA polymerase (450 aa).

The next 11 membrane-spanning stretches (helical) occupy residues 6-26 (FSGL…LTWF), 37-57 (VFFS…TSVL), 63-83 (VGVA…CFYA), 118-138 (VILM…NGFL), 155-175 (GVAL…VYFL), 181-201 (AWLF…MIVG), 207-227 (IIIA…ISLW), 228-248 (MLAA…LKRY), 341-361 (LVVM…GLII), 378-398 (YKAA…IVLA), and 410-430 (VFFI…YWLF).

It belongs to the WzyE family. Probably part of a complex composed of WzxE, WzyE and WzzE.

It localises to the cell inner membrane. The protein operates within bacterial outer membrane biogenesis; enterobacterial common antigen biosynthesis. Its function is as follows. Probably involved in the polymerization of enterobacterial common antigen (ECA) trisaccharide repeat units. The chain is Probable ECA polymerase from Escherichia coli O7:K1 (strain IAI39 / ExPEC).